A 1292-amino-acid polypeptide reads, in one-letter code: DNA-directed RNA polymerase subunit beta' (1292 aa).

Positions 70, 72, 85, and 88 each coordinate Zn(2+). Residues D532, D534, and D536 each contribute to the Mg(2+) site. The Zn(2+) site is built by C911, C987, C994, and C997.

It belongs to the RNA polymerase beta' chain family. In terms of assembly, the RNAP catalytic core consists of 2 alpha, 1 beta, 1 beta' and 1 omega subunit. When a sigma factor is associated with the core the holoenzyme is formed, which can initiate transcription. The cofactor is Mg(2+). Requires Zn(2+) as cofactor.

The catalysed reaction is RNA(n) + a ribonucleoside 5'-triphosphate = RNA(n+1) + diphosphate. In terms of biological role, DNA-dependent RNA polymerase catalyzes the transcription of DNA into RNA using the four ribonucleoside triphosphates as substrates. The chain is DNA-directed RNA polymerase subunit beta' from Mycoplasma genitalium (strain ATCC 33530 / DSM 19775 / NCTC 10195 / G37) (Mycoplasmoides genitalium).